Here is a 263-residue protein sequence, read N- to C-terminus: HTH-type transcriptional repressor NanR (263 aa).

The disordered stretch occupies residues 1–22; that stretch reads MGLMNAFDSQTEDSSPAIGRNL. The HTH gntR-type domain maps to 30–98; it reads KKLSEMVEEE…NGERARVSRP (69 aa). Positions 58-77 form a DNA-binding region, H-T-H motif; that stretch reads ERELMAFFNVGRPSVREALA.

It belongs to the NanR family.

Functionally, transcriptional repressor that controls expression of the genes required for the catabolism of sialic acids. This chain is HTH-type transcriptional repressor NanR, found in Escherichia coli (strain 55989 / EAEC).